The following is a 429-amino-acid chain: Histidine--tRNA ligase (429 aa).

This sequence belongs to the class-II aminoacyl-tRNA synthetase family. Homodimer.

The protein resides in the cytoplasm. The catalysed reaction is tRNA(His) + L-histidine + ATP = L-histidyl-tRNA(His) + AMP + diphosphate + H(+). This Cyanothece sp. (strain PCC 7425 / ATCC 29141) protein is Histidine--tRNA ligase.